Here is a 236-residue protein sequence, read N- to C-terminus: Peroxisomal coenzyme A diphosphatase NUDT7 (236 aa).

N6-succinyllysine is present on K20. A Nudix hydrolase domain is found at S37 to D169. A Nudix box motif is present at residues K77–G98. Mg(2+)-binding residues include E92 and E96. N6-succinyllysine is present on K178. The Microbody targeting signal motif lies at S234–L236.

The protein belongs to the Nudix hydrolase family. PCD1 subfamily. In terms of assembly, monomer. The cofactor is Mn(2+). Mg(2+) is required as a cofactor. In terms of tissue distribution, highly expressed in liver, brown adipose tissue and heart. Expressed at intermediate level in lung and kidney and at low level in brain. As to expression, expressed in liver, brown adipose tissue and heart at 20 times lower levels than isoform 1.

It localises to the peroxisome. It catalyses the reaction hexanoyl-CoA + H2O = hexanoyl-4'-phosphopantetheine + adenosine 3',5'-bisphosphate + 2 H(+). The enzyme catalyses octanoyl-CoA + H2O = S-octanoyl-4'-phosphopantetheine + adenosine 3',5'-bisphosphate + 2 H(+). It carries out the reaction butanoyl-CoA + H2O = S-butanoyl-4'-phosphopantetheine + adenosine 3',5'-bisphosphate + 2 H(+). The catalysed reaction is decanoyl-CoA + H2O = decanoyl-4'-phosphopantetheine + adenosine 3',5'-bisphosphate + 2 H(+). It catalyses the reaction dodecanoyl-CoA + H2O = S-dodecanoyl-4'-phosphopantetheine + adenosine 3',5'-bisphosphate + 2 H(+). The enzyme catalyses tetradecanoyl-CoA + H2O = tetradecanoyl-4'-phosphopantetheine + adenosine 3',5'-bisphosphate + 2 H(+). It carries out the reaction choloyl-CoA + H2O = S-choloyl-4'-phosphopantetheine + adenosine 3',5'-bisphosphate + 2 H(+). The catalysed reaction is 3alpha,7alpha,12alpha-trihydroxy-5beta-cholestan-26-oyl-CoA + H2O = 3alpha,7alpha,12alpha-trihydroxy-5beta-cholestan-26-oyl-4'-phosphopantetheine + adenosine 3',5'-bisphosphate + 2 H(+). It catalyses the reaction acetyl-CoA + H2O = S-acetyl-4'-phosphopantetheine + adenosine 3',5'-bisphosphate + 2 H(+). The enzyme catalyses CoA + H2O = (R)-4'-phosphopantetheine + adenosine 3',5'-bisphosphate + 2 H(+). It carries out the reaction propanoyl-CoA + H2O = propanoyl-4'-phosphopantetheine + adenosine 3',5'-bisphosphate + 2 H(+). The catalysed reaction is malonyl-CoA + H2O = malonyl-4'-phosphopantetheine + adenosine 3',5'-bisphosphate + 2 H(+). It catalyses the reaction succinyl-CoA + H2O = succinyl-4'-phosphopantetheine + adenosine 3',5'-bisphosphate + 2 H(+). The enzyme catalyses a 5'-end CoA-ribonucleoside in mRNA + H2O = a 5'-end phospho-adenosine-phospho-ribonucleoside in mRNA + (R)-4'-phosphopantetheine + 2 H(+). With respect to regulation, inhibited by fluoride. Its function is as follows. Fatty acyl-coenzyme A (CoA) diphosphatase that hydrolyzes fatty acyl-CoA to yield acyl-4'-phosphopantetheine and adenosine 3',5'-bisphosphate. Cleaves CoA, CoA esters and oxidized CoA with similar efficiencies. Preferentially hydrolyzes medium-chain acyl-CoAs and bile acid-CoAs. Has no activity toward NDP-sugars, CDP-alcohols, (deoxy)nucleoside 5'-triphosphates, nucleoside 5'-di or monophosphates, diadenosine polyphosphates, NAD, NADH, NADP, NADPH or thymidine-5'-monophospho-p-nitrophenyl ester. May be required to eliminate oxidized CoA from peroxisomes, or regulate CoA and acyl-CoA levels in this organelle in response to metabolic demand. Does not play a role in U8 snoRNA decapping activity. Binds U8 snoRNA. Exhibits decapping activity towards dpCoA-capped RNAs in vitro. This is Peroxisomal coenzyme A diphosphatase NUDT7 from Mus musculus (Mouse).